Reading from the N-terminus, the 513-residue chain is MGLQFLAPGEKVFPSLHRIIISTFALIAAYIFIVRPLRNILFHPLKKYPGPKLFGASSIPYGFYYMTGKWHLKIRNLHATYGPIVRIGPDELSYACPEAWEDIYGRYVPTKRRENPKPVWYCSPDAHDMVGASLGDHGRMRRVMAPGFTYSAMCKQEPLIKGHVDMFLSKLCSLCGDGRAEVNILDWLTYCTFDLIGDLSFGEPFGCMENNMLHPWLQLVFANIYITHIILLCQRIPFFYLFLPIKTTYQLWRDFRRHVVLLREVVERRLSLSTPRDDFLDVMTTKQTSTLYMTKEEIFKNAILLTGGGAETTSSSLSGMMYMLTMRPDVKEKILEELRDTFPSEDDINMRSVAQLTYTGAFIEESMRYYPPGPNTMWRITPPAGNTILGDYIPGNTIVGIPHRVLYRSEAYWKDADGFRPERWLPDSQRPAEFDEDKREGFHPFSYGPRACIAMNLAYAEMRYILARFLWHFDIEATKESKKWMDDQKAYLVWDKPGLFVHLKPRAGVKVAA.

2 helical membrane-spanning segments follow: residues Phe13–Ile33 and Met212–Leu232. Cys452 is a heme binding site.

Belongs to the cytochrome P450 family. Heme is required as a cofactor.

Its subcellular location is the membrane. The catalysed reaction is dehydroprobetaenone I + NADPH + O2 + H(+) = epoxybetaenone + NADP(+) + H2O. It carries out the reaction dehydroprobetaenone I + 3 NADPH + 3 O2 + 3 H(+) = betaenone C + 3 NADP(+) + 3 H2O. It catalyses the reaction probetaenone I + 3 NADPH + 3 O2 + 3 H(+) = betaenone B + 3 NADP(+) + 3 H2O. It functions in the pathway mycotoxin biosynthesis. Its function is as follows. Cytochrome P450 monooxygenase; part of the gene cluster that mediates the biosynthesis of the phytotoxin stemphyloxin II. The first step of the pathway is the synthesis of dehydroprobetaenone I by the polyketide synthase sthA and the enoyl reductase sthE via condensation of one acetyl-CoA starter unit with 7 malonyl-CoA units and 5 methylations. The C-terminal reductase (R) domain of sthA catalyzes the reductive release of the polyketide chain. Because sthA lacks a designated enoylreductase (ER) domain, the required activity is provided the enoyl reductase sthE. The short-chain dehydrogenase/reductase sthC then catalyzes reduction of dehydroprobetaenone I to probetaenone I. The cytochrome P450 monooxygenase sthF catalyzes successive epoxidation, oxidation (resulting from epoxide opening) and hydroxylation to install a tertiary alcohol in the decaline ring to yield betaenone C from dehydroprobetaenone I and betaenone B from probetaenone I. The FAD-linked oxidoreductase sthB is responsible for the conversion of betaenone C to betaenone A via an intramolecular aldol reaction between C-1 and C-17 to form the bridged tricyclic system in betaenone A. Finally, the cytochrome P450 monooxygenase sthD catalyzes the hydroxylation of C-15 to afford the final metabolite stemphyloxin II. The polypeptide is Cytochrome P450 monooxygenase sthF (Phaeosphaeria nodorum (strain SN15 / ATCC MYA-4574 / FGSC 10173) (Glume blotch fungus)).